The chain runs to 152 residues: Dehydratase aurZ (152 aa).

Residues 34-129 enclose the EthD domain; it reads PSLSEKEYRH…APDHVNFADT (96 aa).

This sequence belongs to the tpcK family.

It catalyses the reaction naphtopyrone YWA1 = norrubrofusarin + H2O + H(+). Its pathway is pigment biosynthesis. In terms of biological role, dehydratase; part of the gene cluster that mediates the biosynthesis of aurofusarin, a red mycelium pigment which is acting as a mycotoxin. The first step is performed by the polyketide synthase which condenses one acetyl-CoA and 6 malonyl-CoA units to form the first intermediate, the cyclic heptaketide and yellow pigment YWA1. The C2 hydroxyl group in the pyrone ring of YWA1 is probably formed during ring closure by an aldol-type cyclization reaction. The dehydratase aurZ then acts as the first tailoring enzyme in the aurofusarin biosynthetic pathway by converting YWA1 to nor-rubrofusarin. Nor-rubrofusarin is then methylated to rubrofusarin by the O-methyltransferase aurJ. Rubrofusarin is then transported across the plasma membrane by the rubrofusarin-specific pump aurT for further enzymatic processing by the extracellular complex composed of GIP1, aurF, aurO and aurS to yield aurofusarin. The chain is Dehydratase aurZ from Gibberella zeae (strain ATCC MYA-4620 / CBS 123657 / FGSC 9075 / NRRL 31084 / PH-1) (Wheat head blight fungus).